The primary structure comprises 468 residues: UDP-N-acetylmuramate--L-alanine ligase (468 aa).

Residue Gly-112 to Thr-118 participates in ATP binding.

Belongs to the MurCDEF family.

It is found in the cytoplasm. The enzyme catalyses UDP-N-acetyl-alpha-D-muramate + L-alanine + ATP = UDP-N-acetyl-alpha-D-muramoyl-L-alanine + ADP + phosphate + H(+). It participates in cell wall biogenesis; peptidoglycan biosynthesis. Cell wall formation. The polypeptide is UDP-N-acetylmuramate--L-alanine ligase (Bordetella pertussis (strain Tohama I / ATCC BAA-589 / NCTC 13251)).